Here is a 77-residue protein sequence, read N- to C-terminus: U14-theraphotoxin-Cg1b (77 aa).

The first 21 residues, 1 to 21, serve as a signal peptide directing secretion; sequence MKTSVLLVILGIAAITVQCTA. A propeptide spanning residues 22 to 49 is cleaved from the precursor; sequence SESVEQDSLRTFVDAVLGWNAEMASEAR. 3 disulfides stabilise this stretch: cysteine 50–cysteine 64, cysteine 57–cysteine 69, and cysteine 63–cysteine 75.

It belongs to the neurotoxin 10 (Hwtx-1) family. 65 (Jztx-21) subfamily. As to expression, expressed by the venom gland.

Its subcellular location is the secreted. Functionally, probable ion channel inhibitor. The chain is U14-theraphotoxin-Cg1b from Chilobrachys guangxiensis (Chinese earth tiger tarantula).